The following is a 333-amino-acid chain: 4-hydroxyproline 2-epimerase (333 aa).

Residue C90 is the Proton acceptor of the active site. Residues 91–92 (GH), H223, and D249 contribute to the substrate site. The active-site Proton donor is the C253. Substrate is bound at residue 254-255 (GT).

This sequence belongs to the proline racemase family.

It catalyses the reaction trans-4-hydroxy-L-proline = cis-4-hydroxy-D-proline. Its function is as follows. Catalyzes the epimerization of trans-4-hydroxy-L-proline (t4LHyp) to cis-4-hydroxy-D-proline (c4DHyp). May be involved in a degradation pathway of t4LHyp, which would allow S.novella to grow on t4LHyp as a sole carbon source. In Ancylobacter novellus (strain ATCC 8093 / DSM 506 / JCM 20403 / CCM 1077 / IAM 12100 / NBRC 12443 / NCIMB 10456) (Starkeya novella), this protein is 4-hydroxyproline 2-epimerase.